Here is a 317-residue protein sequence, read N- to C-terminus: Zinc metalloproteinase/disintegrin (317 aa).

The propeptide occupies 1–26; sequence EAPKMCGVTQNWESYEPIKKASQSNL. A Peptidase M12B domain is found at 32–228; that stretch reads RYIELVIVAD…QKPQCILNKP (197 aa). 2 residues coordinate Ca(2+): glutamate 35 and aspartate 119. 3 disulfides stabilise this stretch: cysteine 143–cysteine 223, cysteine 183–cysteine 207, and cysteine 185–cysteine 190. Histidine 168 is a Zn(2+) binding site. Residue glutamate 169 is part of the active site. Residues histidine 172 and histidine 178 each contribute to the Zn(2+) site. 2 residues coordinate Ca(2+): cysteine 223 and asparagine 226. Positions 229–244 are excised as a propeptide; sequence LRTDTVSTPVSGNELL. Positions 236–317 constitute a Disintegrin domain; that stretch reads TPVSGNELLE…AGCPRNPFHA (82 aa). 6 disulfide bridges follow: cysteine 250-cysteine 259, cysteine 252-cysteine 260, cysteine 265-cysteine 279, cysteine 273-cysteine 303, cysteine 278-cysteine 282, and cysteine 291-cysteine 310. Residues 295–297 carry the Cell attachment site motif; it reads RGD.

The protein belongs to the venom metalloproteinase (M12B) family. P-II subfamily. P-IIa sub-subfamily. In terms of assembly, monomer. The cofactor is Zn(2+). Expressed by the venom gland.

It localises to the secreted. Metalloproteinase that impairs hemostasis in the envenomed animal. Its function is as follows. Inhibits GPIIb/GPIIIa (ITGA2B/ITGB3) binding to immobilized fibrinogen with an IC(50) of 2.2 nM and ADP-induced platelet aggregation with an IC(50) of 131 nM, respectively. Inhibits angiogenesis. By binding to vitronectin receptor (alpha-V/beta-3 (ITGAV/ITGB3)), also induces apoptosis of endothelial cells by blocking their attachment to extracellular matrix proteins. In terms of biological role, inhibits platelet aggregation induced by ADP (IC(50) is 30 nM), collagen (IC(50) is 500 nM), thrombin and epinephrin (IC(50) is 160 nM). In Gloydius brevicauda (Korean slamosa snake), this protein is Zinc metalloproteinase/disintegrin.